The following is a 327-amino-acid chain: MSSSMKAPLRNPPRLLAGEGRVHLSASNAHPCFSTSLAAYPLKLLSPTPLPSQPANFAVLYTLAYGGGLVAGDLVSLSVLIDPGCGLVMLTQGTTKVYKRRPGLRPLSHLHTSQPSSDPNLTRQRMHIRLCSSSFLLLLPDSVSPFRSSIYSQTQRFVLPADRTASVLILDWVNSGRGQRPQEGDEEIWSMDSYGSTNEIWVGDERIMRERMVLDNSHFGLNAGGSLSPIANQLSPYNVYATVLIIGPHLTTLFSYLAYLSDHSRQFQLKEPPGLAWSFSEIDDKLQAGVVRIAACEVEDARKWLREVMTAGGVAALVGEGMWPRCI.

N120 carries N-linked (GlcNAc...) asparagine glycosylation. Residues 239–259 (VYATVLIIGPHLTTLFSYLAY) traverse the membrane as a helical segment.

Belongs to the UreD family. In terms of assembly, URE4, URE6 and URE7 may form a complex that acts as a GTP-hydrolysis-dependent molecular chaperone, activating the urease apoprotein URE1.

The protein resides in the membrane. Urease accessory protein required for the maturation and activation of urease via the functional incorporation of the urease nickel metallocenter. Plays a role in host brain invasion. This is Urease accessory protein 4 from Cryptococcus neoformans var. grubii serotype A (strain H99 / ATCC 208821 / CBS 10515 / FGSC 9487) (Filobasidiella neoformans var. grubii).